Reading from the N-terminus, the 256-residue chain is Small ribosomal subunit protein eS1 (256 aa).

Basic residues predominate over residues 1–18 (MAVGKNKRLSKGKKGVKK). Residues 1 to 21 (MAVGKNKRLSKGKKGVKKRTV) form a disordered region. Residue A2 is modified to N-acetylalanine; partial.

This sequence belongs to the eukaryotic ribosomal protein eS1 family. In terms of assembly, component of the small ribosomal subunit. Mature ribosomes consist of a small (40S) and a large (60S) subunit. The 40S subunit contains about 33 different proteins and 1 molecule of RNA (18S). The 60S subunit contains about 49 different proteins and 3 molecules of RNA (25S, 5.8S and 5S).

It is found in the cytoplasm. In Neosartorya fischeri (strain ATCC 1020 / DSM 3700 / CBS 544.65 / FGSC A1164 / JCM 1740 / NRRL 181 / WB 181) (Aspergillus fischerianus), this protein is Small ribosomal subunit protein eS1 (rps1).